A 264-amino-acid polypeptide reads, in one-letter code: 3-methyl-2-oxobutanoate hydroxymethyltransferase (264 aa).

Mg(2+) contacts are provided by Asp44 and Asp83. 3-methyl-2-oxobutanoate contacts are provided by residues 44–45 (DS), Asp83, and Lys111. Glu113 is a Mg(2+) binding site. Glu180 functions as the Proton acceptor in the catalytic mechanism.

Belongs to the PanB family. In terms of assembly, homodecamer; pentamer of dimers. Mg(2+) is required as a cofactor.

Its subcellular location is the cytoplasm. It catalyses the reaction 3-methyl-2-oxobutanoate + (6R)-5,10-methylene-5,6,7,8-tetrahydrofolate + H2O = 2-dehydropantoate + (6S)-5,6,7,8-tetrahydrofolate. It participates in cofactor biosynthesis; (R)-pantothenate biosynthesis; (R)-pantoate from 3-methyl-2-oxobutanoate: step 1/2. Functionally, catalyzes the reversible reaction in which hydroxymethyl group from 5,10-methylenetetrahydrofolate is transferred onto alpha-ketoisovalerate to form ketopantoate. This Marinobacter nauticus (strain ATCC 700491 / DSM 11845 / VT8) (Marinobacter aquaeolei) protein is 3-methyl-2-oxobutanoate hydroxymethyltransferase.